A 155-amino-acid polypeptide reads, in one-letter code: Cytochrome c-type biogenesis protein CcmE (155 aa).

Topologically, residues 1-8 (MNPRRKKR) are cytoplasmic. The chain crosses the membrane as a helical; Signal-anchor for type II membrane protein span at residues 9–29 (LLITSLLAVALSLAVGLVLFA). The Periplasmic segment spans residues 30–155 (LQQNIDLFYT…GMDNFKANNK (126 aa)). 2 residues coordinate heme: His131 and Tyr135.

Belongs to the CcmE/CycJ family.

It localises to the cell inner membrane. Heme chaperone required for the biogenesis of c-type cytochromes. Transiently binds heme delivered by CcmC and transfers the heme to apo-cytochromes in a process facilitated by CcmF and CcmH. This chain is Cytochrome c-type biogenesis protein CcmE, found in Psychromonas ingrahamii (strain DSM 17664 / CCUG 51855 / 37).